A 204-amino-acid polypeptide reads, in one-letter code: Large ribosomal subunit protein uL22m (204 aa).

A mitochondrion-targeting transit peptide spans 1–38 (MAAVILERLGALWVQNLRGKLALGILPQSHIHTSASLE).

The protein belongs to the universal ribosomal protein uL22 family. In terms of assembly, component of the mitochondrial ribosome large subunit (39S) which comprises a 16S rRNA and about 50 distinct proteins.

The protein resides in the mitochondrion. In Bos taurus (Bovine), this protein is Large ribosomal subunit protein uL22m (MRPL22).